The chain runs to 343 residues: 4-hydroxy-2-oxovalerate aldolase 2 (343 aa).

The 251-residue stretch at 5–255 (ITIVDTTLRD…DTGVDLFPLI (251 aa)) folds into the Pyruvate carboxyltransferase domain. Substrate-binding positions include 13 to 14 (RD), serine 167, and histidine 194. Aspartate 14 lines the Mn(2+) pocket. The Mn(2+) site is built by histidine 194 and histidine 196. Residue tyrosine 285 participates in substrate binding.

It belongs to the 4-hydroxy-2-oxovalerate aldolase family.

The enzyme catalyses (S)-4-hydroxy-2-oxopentanoate = acetaldehyde + pyruvate. This Rhodococcus jostii (strain RHA1) protein is 4-hydroxy-2-oxovalerate aldolase 2.